Reading from the N-terminus, the 223-residue chain is Putative germin-like protein 2-3 (223 aa).

The signal sequence occupies residues Met-1–Ala-28. Cys-38 and Cys-53 form a disulfide bridge. Positions Ser-67–Asp-217 constitute a Cupin type-1 domain. Asn-74 carries an N-linked (GlcNAc...) asparagine glycan. Residues His-115, His-117, Glu-122, and His-163 each coordinate Mn(2+).

Belongs to the germin family. In terms of assembly, oligomer (believed to be a pentamer but probably hexamer).

It is found in the secreted. The protein localises to the extracellular space. The protein resides in the apoplast. Functionally, may play a role in plant defense. Probably has no oxalate oxidase activity even if the active site is conserved. The polypeptide is Putative germin-like protein 2-3 (Oryza sativa subsp. japonica (Rice)).